A 423-amino-acid polypeptide reads, in one-letter code: MKLCSLAVLVPIVLFCEQHVFAFQSGQVLAALPRTSRQVQVLQNLTTTYEIVLWQPVTADLIVKKKQVHFFVNASDVDNVKAHLNVSGIPCSVLLADVEDLIQQQISNDTVSPRASASYYEQYHSLNEIYSWIEFITERHPDMLTKIHIGSSFEKYPLYVLKVSGKEQAAKNAIWIDCGIHAREWISPAFCLWFIGHITQFYGIIGQYTNLLRLVDFYVMPVVNVDGYDYSWKKNRMWRKNRSFYANNHCIGTDLNRNFASKHWCEEGASSSSCSETYCGLYPESEPEVKAVASFLRRNINQIKAYISMHSYSQHIVFPYSYTRSKSKDHEELSLVASEAVRAIEKISKNTRYTHGHGSETLYLAPGGGDDWIYDLGIKYSFTIELRDTGTYGFLLPERYIKPTCREAFAAVSKIAWHVIRNV.

The N-terminal stretch at methionine 1–alanine 22 is a signal peptide. Residues phenylalanine 23–arginine 114 constitute a propeptide, activation peptide. 3 N-linked (GlcNAc...) asparagine glycosylation sites follow: asparagine 44, asparagine 73, and asparagine 85. N-linked (GlcNAc...) (complex) asparagine glycosylation is present at asparagine 108. Residues glutamine 122 to valine 419 form the Peptidase M14 domain. An intrachain disulfide couples cysteine 178 to cysteine 191. Residues histidine 181 and glutamate 184 each coordinate Zn(2+). Substrate is bound by residues histidine 181–glutamate 184 and arginine 239. A glycan (N-linked (GlcNAc...) asparagine; partial) is linked at asparagine 241. 2 disulfide bridges follow: cysteine 250–cysteine 274 and cysteine 265–cysteine 279. Asparagine 256–arginine 257 lines the substrate pocket. Residue histidine 310 coordinates Zn(2+). Residues serine 311–tyrosine 312 and tyrosine 363 contribute to the substrate site. Glutamate 385 functions as the Proton donor/acceptor in the catalytic mechanism.

Belongs to the peptidase M14 family. The cofactor is Zn(2+). Post-translationally, N-glycosylated. N-glycan at Asn-108: Hex5HexNAc4. Plasma; synthesized in the liver.

It is found in the secreted. It catalyses the reaction Release of C-terminal Arg and Lys from a polypeptide.. TAFI/CPB2 is unique among carboxypeptidases in that it spontaneously inactivates with a short half-life, a property that is crucial for its role in controlling blood clot lysis. The zymogen is stabilized by interactions with the activation peptide. Release of the activation peptide increases a dynamic flap mobility and in time this leads to conformational changes that disrupt the catalytic site and expose a cryptic thrombin-cleavage site present at Arg-324. Cleaves C-terminal arginine or lysine residues from biologically active peptides such as kinins or anaphylatoxins in the circulation thereby regulating their activities. Down-regulates fibrinolysis by removing C-terminal lysine residues from fibrin that has already been partially degraded by plasmin. This Homo sapiens (Human) protein is Carboxypeptidase B2 (CPB2).